Reading from the N-terminus, the 91-residue chain is Small ribosomal subunit protein uS15c (91 aa).

This sequence belongs to the universal ribosomal protein uS15 family. As to quaternary structure, part of the 30S ribosomal subunit.

The protein resides in the plastid. The protein localises to the chloroplast. In Adiantum capillus-veneris (Maidenhair fern), this protein is Small ribosomal subunit protein uS15c (rps15).